We begin with the raw amino-acid sequence, 431 residues long: Acetylornithine aminotransferase (431 aa).

Residues 118–119 (GA) and F157 each bind pyridoxal 5'-phosphate. R160 serves as a coordination point for N(2)-acetyl-L-ornithine. 251–254 (DEVQ) is a pyridoxal 5'-phosphate binding site. K284 is subject to N6-(pyridoxal phosphate)lysine. S313 is a N(2)-acetyl-L-ornithine binding site. T314 contributes to the pyridoxal 5'-phosphate binding site.

Belongs to the class-III pyridoxal-phosphate-dependent aminotransferase family. ArgD subfamily. In terms of assembly, homodimer. The cofactor is pyridoxal 5'-phosphate.

The protein localises to the cytoplasm. It catalyses the reaction N(2)-acetyl-L-ornithine + 2-oxoglutarate = N-acetyl-L-glutamate 5-semialdehyde + L-glutamate. Its pathway is amino-acid biosynthesis; L-arginine biosynthesis; N(2)-acetyl-L-ornithine from L-glutamate: step 4/4. The chain is Acetylornithine aminotransferase from Bifidobacterium longum (strain NCC 2705).